A 1522-amino-acid polypeptide reads, in one-letter code: DNA topoisomerase 2-binding protein 1 (1522 aa).

BRCT domains lie at 101 to 189 (VYNM…RYTD) and 195 to 284 (FKCP…IYKT). Phosphothreonine is present on Thr298. Residue Ser301 is modified to Phosphoserine. 3 consecutive BRCT domains span residues 354 to 444 (APED…PYIH), 548 to 633 (TEEG…SNPL), and 641 to 738 (TGMT…HFLI). The interaction with CIP2A stretch occupies residues 756–891 (INLNSDTAEH…AVALSASPQL (136 aa)). Thr779 and Thr848 each carry phosphothreonine. Positions 852-858 (PSQQKRK) match the Nuclear localization signal motif. Ser860 is subject to Phosphoserine. Thr861 bears the Phosphothreonine mark. A phosphoserine mark is found at Ser864, Ser886, and Ser888. The BRCT 6 domain maps to 900–991 (EAPKPLHKVV…KHLPESLYPH (92 aa)). Ser1002 is modified (phosphoserine). Positions 1018-1058 (VSSTKDDEPDPLILEENDVDNMATNNKESAPSNGSGKNDSK) are disordered. Positions 1024–1036 (DEPDPLILEENDV) are enriched in acidic residues. The span at 1039 to 1058 (MATNNKESAPSNGSGKNDSK) shows a compositional bias: polar residues. Phosphothreonine occurs at positions 1062 and 1064. Polar residues predominate over residues 1083–1114 (SIVKPQGQRTSLSRSGCNSASSTPDSTRSARS). The disordered stretch occupies residues 1083–1118 (SIVKPQGQRTSLSRSGCNSASSTPDSTRSARSGRSR). 2 BRCT domains span residues 1259 to 1351 (ETHE…DYEW) and 1389 to 1486 (IVEG…NYCL). Residues 1501 to 1522 (TGLSQKRKAPTEKNKIKRPRVH) are disordered. Residue Ser1504 is modified to Phosphoserine. A Nuclear localization signal motif is present at residues 1517 to 1520 (KRPR).

This sequence belongs to the TOPBP1 family. In terms of assembly, interacts (via BRCT domains 1 and 2) with (phosphorylated) MDC1; promoting TOPBP1 recruitment to DNA damage sites during mitosis. Interacts (via BRCT domains 7 and 8) with (autophosphorylated) ATR; promoting activation of ATR. Interacts (via BRCT domains 7 and 8) with (phosphorylated) POLQ; specifically binds POLQ phosphorylated by PLK1, promoting POLQ recruitment to DNA damage sites. Interacts (via BRCT domains 1 and 2) with (phosphorylated) RAD9A. Interacts (via BRCT domain 2) with (phosphorylated) TP53BP1. Interacts (via BRCT domain 2) with (phosphorylated) HTATSF1. Interacts (via BRCT domains 7 and 8) with (phosphorylated) RAD51; promoting RAD51 recruitment to damaged chromatin. Interacts with CIP2A; forming the CIP2A-TOPBP1 complex. Interacts with POLE. Interacts with UBR5. Interacts with E2F1. Interacts with PML. Interacts with SMARCA2. Interacts with SMARCA4. Interacts with RHNO1. May interact with TOP2B. Interacts with TICRR. Interacts with HELB. Interacts (via residues 1233-1522) with RECQL4. Post-translationally, phosphorylated on serine and threonine residues in response to X-ray irradiation. Ubiquitinated and degraded by the proteasome. X-ray irradiation reduces ubiquitination. Deubiquitinated by USP13; leading to TOPBP1 stabilizion and activation of the ATR-TOPBP1 axis pathway. As to expression, highly expressed in heart, brain, placenta, lung and kidney.

The protein localises to the nucleus. Its subcellular location is the chromosome. The protein resides in the cytoplasm. It localises to the cytoskeleton. It is found in the microtubule organizing center. The protein localises to the centrosome. Its subcellular location is the spindle pole. In terms of biological role, scaffold protein that acts as a key protein-protein adapter in DNA replication and DNA repair. Composed of multiple BRCT domains, which specifically recognize and bind phosphorylated proteins, bringing proteins together into functional combinations. Required for DNA replication initiation but not for the formation of pre-replicative complexes or the elongation stages. Necessary for the loading of replication factors onto chromatin, including GMNC, CDC45, DNA polymerases and components of the GINS complex. Plays a central role in DNA repair by bridging proteins and promoting recruitment of proteins to DNA damage sites. Involved in double-strand break (DSB) repair via homologous recombination in S-phase by promoting the exchange between the DNA replication factor A (RPA) complex and RAD51. Mechanistically, TOPBP1 is recruited to DNA damage sites in S-phase via interaction with phosphorylated HTATSF1, and promotes the loading of RAD51, thereby facilitating RAD51 nucleofilaments formation and RPA displacement, followed by homologous recombination. Involved in microhomology-mediated end-joining (MMEJ) DNA repair by promoting recruitment of polymerase theta (POLQ) to DNA damage sites during mitosis. MMEJ is an alternative non-homologous end-joining (NHEJ) machinery that takes place during mitosis to repair DSBs in DNA that originate in S-phase. Recognizes and binds POLQ phosphorylated by PLK1, enabling its recruitment to DSBs for subsequent repair. Involved in G1 DNA damage checkpoint by acting as a molecular adapter that couples TP53BP1 and the 9-1-1 complex. In response to DNA damage, triggers the recruitment of checkpoint signaling proteins on chromatin, which activate the CHEK1 signaling pathway and block S-phase progression. Acts as an activator of the kinase activity of ATR. Also required for chromosomal stability when DSBs occur during mitosis by forming filamentous assemblies that bridge MDC1 and tether broken chromosomes during mitosis. Together with CIP2A, plays an essential role in the response to genome instability generated by the presence of acentric chromosome fragments derived from shattered chromosomes within micronuclei. Micronuclei, which are frequently found in cancer cells, consist of chromatin surrounded by their own nuclear membrane: following breakdown of the micronuclear envelope, a process associated with chromothripsis, the CIP2A-TOPBP1 complex tethers chromosome fragments during mitosis to ensure clustered segregation of the fragments to a single daughter cell nucleus, facilitating re-ligation with limited chromosome scattering and loss. Recruits the SWI/SNF chromatin remodeling complex to E2F1-responsive promoters, thereby down-regulating E2F1 activity and inhibiting E2F1-dependent apoptosis during G1/S transition and after DNA damage. The polypeptide is DNA topoisomerase 2-binding protein 1 (Homo sapiens (Human)).